The primary structure comprises 477 residues: MTATPQASARPERPFATVNPYTGETVKTFPFLESAEIPALIERADQAYREWGQRPVTERAAIMRRAAELMLERTDELASLITLEMGKLLREAKGEVALAASILNYYGEQGPSFLEPKTIPVPQGEAAVLHAPLGVLLGIEPWNYPLYQVVRFAAPNLVVGNTVLLKHSELCPQSALALEQLFHDAGVPQGAYTNLFLRIADIEQVIAHPAVQGVSLTGSERAGASVAELAGRHLKKCVLELGGSDPFIVLDAEDLDTTVKAAATGRLSNTGQACIAAKRLMVVDDLYDEFVSRLGQTFSAFVPGDPADPSTRLGPLSSEQAARDLQAQVQDAIDKGATVVAGGQRPEHPGAFVQPTVLTDVTPDMRAYHEELFGPVAVVYRVRDEDEAVALANASTYGLGGAVFSSDLDRAQRVAERLDTGMVWINHPTSSAADLPFGGVKRSGFGRELSSMGMLEFTNQKLVRAFPTKQKPAQVAG.

Residues 142 to 143, 166 to 169, and 218 to 219 each bind NADP(+); these read WN, KHSE, and GS. Glutamate 240 acts as the Proton acceptor in catalysis. Residue leucine 241 coordinates NADP(+). The Nucleophile role is filled by cysteine 274. Glutamate 371 is a binding site for NADP(+).

Belongs to the aldehyde dehydrogenase family.

The enzyme catalyses succinate semialdehyde + NADP(+) + H2O = succinate + NADPH + 2 H(+). The protein operates within amino-acid degradation; 4-aminobutanoate degradation. Its function is as follows. Catalyzes the NADP(+) dependent oxidation of succinate semialdehyde to succinate. This chain is Succinate-semialdehyde dehydrogenase [NADP(+)] (ssdA), found in Deinococcus radiodurans (strain ATCC 13939 / DSM 20539 / JCM 16871 / CCUG 27074 / LMG 4051 / NBRC 15346 / NCIMB 9279 / VKM B-1422 / R1).